The chain runs to 102 residues: Virulence plasmid protein pGP4-D (102 aa).

This Chlamydia trachomatis serovar L2 (strain ATCC VR-902B / DSM 19102 / 434/Bu) protein is Virulence plasmid protein pGP4-D.